The sequence spans 90 residues: uncharacterized protein (90 aa).

The N-terminal stretch at 1–20 is a signal peptide; sequence MEKLFVLVFALTLLAFSSEA. The disordered stretch occupies residues 31 to 50; the sequence is QLLRSRRQDRPSKPGFPDEP.

The protein resides in the secreted. This is an uncharacterized protein from Rattus norvegicus (Rat).